Here is a 234-residue protein sequence, read N- to C-terminus: MPPIEPHVCPDLKELRRHQETLAQSVRLEPLQGQPETVAGVDAAYAGEEIVAVAVLFDLATLTPVARSFVVARPALPYIPGFLSFREGPHLAEAVRRLSKRPDLLIVDGQGIAHLKRFGLACHLGVELGIPAIGCAKSRLVGEYVEPAAERGSRTLLLDRKEAVGAVLRTRSNVRPVFVSPGHLITIDEAVAMVLRTTAGFRLPEPQREADRFAAEIKRKLLAGEAYANTRCKA.

2 residues coordinate Mg(2+): Asp42 and Asp108.

This sequence belongs to the endonuclease V family. Mg(2+) serves as cofactor.

It is found in the cytoplasm. The enzyme catalyses Endonucleolytic cleavage at apurinic or apyrimidinic sites to products with a 5'-phosphate.. DNA repair enzyme involved in the repair of deaminated bases. Selectively cleaves double-stranded DNA at the second phosphodiester bond 3' to a deoxyinosine leaving behind the intact lesion on the nicked DNA. The chain is Endonuclease V from Geotalea uraniireducens (strain Rf4) (Geobacter uraniireducens).